The chain runs to 403 residues: Phosphoglycerate kinase (403 aa).

Residues 22-24 (DFN), Arg37, 60-63 (HFGR), Arg119, and Arg152 contribute to the substrate site. ATP contacts are provided by residues Lys202, Glu324, and 354–357 (GGDT).

This sequence belongs to the phosphoglycerate kinase family. Monomer.

The protein resides in the cytoplasm. It carries out the reaction (2R)-3-phosphoglycerate + ATP = (2R)-3-phospho-glyceroyl phosphate + ADP. It functions in the pathway carbohydrate degradation; glycolysis; pyruvate from D-glyceraldehyde 3-phosphate: step 2/5. This Maricaulis maris (strain MCS10) (Caulobacter maris) protein is Phosphoglycerate kinase.